An 860-amino-acid chain; its full sequence is Leucine--tRNA ligase (860 aa).

The 'HIGH' region motif lies at 42 to 52 (PYPSGRLHMGH). A 'KMSKS' region motif is present at residues 619-623 (KMSKS). Residue Lys622 coordinates ATP.

Belongs to the class-I aminoacyl-tRNA synthetase family.

It localises to the cytoplasm. It carries out the reaction tRNA(Leu) + L-leucine + ATP = L-leucyl-tRNA(Leu) + AMP + diphosphate. The chain is Leucine--tRNA ligase from Escherichia coli (strain K12 / MC4100 / BW2952).